Here is a 237-residue protein sequence, read N- to C-terminus: Phosphoribosylaminoimidazole-succinocarboxamide synthase (237 aa).

The protein belongs to the SAICAR synthetase family.

The enzyme catalyses 5-amino-1-(5-phospho-D-ribosyl)imidazole-4-carboxylate + L-aspartate + ATP = (2S)-2-[5-amino-1-(5-phospho-beta-D-ribosyl)imidazole-4-carboxamido]succinate + ADP + phosphate + 2 H(+). Its pathway is purine metabolism; IMP biosynthesis via de novo pathway; 5-amino-1-(5-phospho-D-ribosyl)imidazole-4-carboxamide from 5-amino-1-(5-phospho-D-ribosyl)imidazole-4-carboxylate: step 1/2. This chain is Phosphoribosylaminoimidazole-succinocarboxamide synthase, found in Psychrobacter cryohalolentis (strain ATCC BAA-1226 / DSM 17306 / VKM B-2378 / K5).